Here is a 701-residue protein sequence, read N- to C-terminus: F-box/LRR-repeat protein 17 (701 aa).

The segment covering 1 to 11 (MGHLLSKEPRN) has biased composition (basic and acidic residues). Disordered regions lie at residues 1–20 (MGHL…RPRC), 72–94 (APAG…YAAA), and 227–300 (GGGG…DADC). Positions 227 to 237 (GGGGGPAGGGA) are enriched in gly residues. The span at 252–264 (EQPPQPLCPPPSS) shows a compositional bias: pro residues. Residues 318–365 (TPDINQLPPSILLKIFSNLSLDERCLSASLVCKYWRDLCLDFQFWKQL) form the F-box domain.

The protein belongs to the FBXL17 family. As to quaternary structure, part of the SCF (SKP1-CUL1-F-box) E3 ubiquitin-protein ligase complex SCF(FBXL17) composed of CUL1, SKP1, RBX1 and FBXL17. Interacts with BTB domain-containing proteins such as KLHL12, BCL6 and BACH1; specifically recognizes and binds a conserved degron of non-consecutive residues present at the interface of BTB dimers of aberrant composition. Interacts with SUFU. Interacts with PRMT1.

It localises to the cytoplasm. Its subcellular location is the nucleus. Its function is as follows. Substrate-recognition component of the SCF(FBXL17) E3 ubiquitin ligase complex, a key component of a quality control pathway required to ensure functional dimerization of BTB domain-containing proteins (dimerization quality control, DQC). FBXL17 specifically recognizes and binds a conserved degron of non-consecutive residues present at the interface of BTB dimers of aberrant composition: aberrant BTB dimer are then ubiquitinated by the SCF(FBXL17) complex and degraded by the proteasome. The ability of the SCF(FBXL17) complex to eliminate compromised BTB dimers is required for the differentiation and survival of neural crest and neuronal cells. The SCF(FBXL17) complex mediates ubiquitination and degradation of BACH1. The SCF(FBXL17) complex is also involved in the regulation of the hedgehog/smoothened (Hh) signaling pathway by mediating the ubiquitination and degradation of SUFU, allowing the release of GLI1 from SUFU for proper Hh signal transduction. The SCF(FBXL17) complex mediates ubiquitination and degradation of PRMT1. This chain is F-box/LRR-repeat protein 17, found in Homo sapiens (Human).